The chain runs to 379 residues: UDP-4-amino-4-deoxy-L-arabinose--oxoglutarate aminotransferase (379 aa).

N6-(pyridoxal phosphate)lysine is present on Lys-183.

The protein belongs to the DegT/DnrJ/EryC1 family. ArnB subfamily. As to quaternary structure, homodimer. Pyridoxal 5'-phosphate is required as a cofactor.

The catalysed reaction is UDP-4-amino-4-deoxy-beta-L-arabinose + 2-oxoglutarate = UDP-beta-L-threo-pentopyranos-4-ulose + L-glutamate. It functions in the pathway nucleotide-sugar biosynthesis; UDP-4-deoxy-4-formamido-beta-L-arabinose biosynthesis; UDP-4-deoxy-4-formamido-beta-L-arabinose from UDP-alpha-D-glucuronate: step 2/3. It participates in bacterial outer membrane biogenesis; lipopolysaccharide biosynthesis. Its function is as follows. Catalyzes the conversion of UDP-4-keto-arabinose (UDP-Ara4O) to UDP-4-amino-4-deoxy-L-arabinose (UDP-L-Ara4N). The modified arabinose is attached to lipid A and is required for resistance to polymyxin and cationic antimicrobial peptides. This Pseudomonas fluorescens (strain ATCC BAA-477 / NRRL B-23932 / Pf-5) protein is UDP-4-amino-4-deoxy-L-arabinose--oxoglutarate aminotransferase.